The chain runs to 465 residues: Probable glucan endo-1,3-beta-glucosidase eglC (465 aa).

A signal peptide spans 1 to 19 (MFTKTQILALALSIASAEA). The active-site Proton donor is the Glu128. N-linked (GlcNAc...) asparagine glycosylation occurs at Asn183. Catalysis depends on Glu239, which acts as the Nucleophile. A glycan (N-linked (GlcNAc...) asparagine) is linked at Asn318. 2 stretches are compositionally biased toward low complexity: residues 320-333 (SSASASASGSSAQS) and 380-438 (SPSA…ATPA). Disordered stretches follow at residues 320–356 (SSASASASGSSAQSTGFVSTTKPAASPSGSSGLGHGG) and 380–440 (SPSA…PADF). Gly442 carries GPI-anchor amidated glycine lipidation. Positions 443 to 465 (AGSRLSGSIFGAAMLVAALAVAL) are cleaved as a propeptide — removed in mature form.

Belongs to the glycosyl hydrolase 17 family. In terms of processing, the GPI-anchor is attached to the protein in the endoplasmic reticulum and serves to target the protein to the cell surface. There, the glucosamine-inositol phospholipid moiety is cleaved off and the GPI-modified mannoprotein is covalently attached via its lipidless GPI glycan remnant to the 1,6-beta-glucan of the outer cell wall layer.

The protein localises to the cell membrane. It localises to the secreted. The protein resides in the cell wall. It catalyses the reaction Hydrolysis of (1-&gt;3)-beta-D-glucosidic linkages in (1-&gt;3)-beta-D-glucans.. Functionally, glucanases play a role in cell expansion during growth, in cell-cell fusion during mating, and in spore release during sporulation. This enzyme may be involved in beta-glucan degradation and also function biosynthetically as a transglycosylase. This chain is Probable glucan endo-1,3-beta-glucosidase eglC (eglC), found in Emericella nidulans (strain FGSC A4 / ATCC 38163 / CBS 112.46 / NRRL 194 / M139) (Aspergillus nidulans).